The chain runs to 180 residues: MALRSRSWELLPVCRNPGCRVAAFSTSAKPVVKPEADPVGNEAVAPEFTNRNPRNLELLAVARKERGWGTVWPSREFWHRLRVIRSQHHIEALVEHRNGQVVVSASTREWAIKKHLYSTKSVVACESVGRVLAQRCLEAGINFMVYQPTPWEAASDSMKRLQIGMIEGGVVLQEPRRIYE.

The protein belongs to the universal ribosomal protein uL18 family. As to quaternary structure, component of the mitochondrial ribosome large subunit (39S) which comprises a 16S rRNA and about 50 distinct proteins.

It localises to the mitochondrion. Its function is as follows. Together with thiosulfate sulfurtransferase (TST), acts as a mitochondrial import factor for the cytosolic 5S rRNA. The precursor form shows RNA chaperone activity; is able to fold the 5S rRNA into an import-competent conformation that is recognized by rhodanese (TST). Both the cytoplasmic and mitochondrial forms are able to bind to the helix IV-loop D in the gamma domain of the 5S rRNA. This is Large ribosomal subunit protein uL18m (MRPL18) from Bos taurus (Bovine).